Consider the following 595-residue polypeptide: Putative terpenoid synthase 16 (595 aa).

Positions 349, 353, 494, and 502 each coordinate Mg(2+). The DDXXD motif motif lies at 349–353; that stretch reads DDTCD.

This sequence belongs to the terpene synthase family. Tpsa subfamily. The cofactor is Mg(2+). It depends on Mn(2+) as a cofactor.

It localises to the cytoplasm. The protein operates within secondary metabolite biosynthesis; terpenoid biosynthesis. The polypeptide is Putative terpenoid synthase 16 (TPS16) (Arabidopsis thaliana (Mouse-ear cress)).